The sequence spans 97 residues: Co-chaperonin GroES (97 aa).

Belongs to the GroES chaperonin family. Heptamer of 7 subunits arranged in a ring. Interacts with the chaperonin GroEL.

The protein resides in the cytoplasm. In terms of biological role, together with the chaperonin GroEL, plays an essential role in assisting protein folding. The GroEL-GroES system forms a nano-cage that allows encapsulation of the non-native substrate proteins and provides a physical environment optimized to promote and accelerate protein folding. GroES binds to the apical surface of the GroEL ring, thereby capping the opening of the GroEL channel. The protein is Co-chaperonin GroES of Stutzerimonas stutzeri (strain A1501) (Pseudomonas stutzeri).